The following is a 404-amino-acid chain: MAKEKIVLAYSGGLDTSVAIQWLVESGYEVIACCLDVGEGKNLDFIKEKAITVGASESYTIDAKEEFAEDFALIALQAHAYYEGKYPLISALSRPLIAKKLVEVARQEGASAIAHGCTGKGNDQVRFEVAIHALAPDLKVVSPVRDWKWSREEEINYAKEHNIPVPIDLDNPFSIDQNLWGRSNECGVLENPWTTPPEAAYDLTVSLEDAPDTPDIVEITFDAGIPISLNGENMSLANLILTLNEIAGKHGVGRIDHIENRLVGIKSREVYECPAAVTLITAHKELEDLTFVREVAHFKPIIEQKISETIYNGLWFSPLTEALVAFLKSTQKFVNGTIRVKLFKGHAIVEGRKSPNSLYDENLATYTSSDTFDQDAAVGFIKLWGLPTKVSAEVNSKVTITTEV.

9–17 (AYSGGLDTS) serves as a coordination point for ATP. Tyr-86 lines the L-citrulline pocket. Gly-116 lines the ATP pocket. L-aspartate is bound by residues Thr-118, Asn-122, and Asp-123. An L-citrulline-binding site is contributed by Asn-122. Arg-126, Ser-174, Ser-183, Glu-259, and Tyr-271 together coordinate L-citrulline.

Belongs to the argininosuccinate synthase family. Type 1 subfamily. In terms of assembly, homotetramer.

It localises to the cytoplasm. It catalyses the reaction L-citrulline + L-aspartate + ATP = 2-(N(omega)-L-arginino)succinate + AMP + diphosphate + H(+). It functions in the pathway amino-acid biosynthesis; L-arginine biosynthesis; L-arginine from L-ornithine and carbamoyl phosphate: step 2/3. This is Argininosuccinate synthase from Listeria monocytogenes serotype 4b (strain CLIP80459).